The sequence spans 368 residues: RNA polymerase sigma factor SigA (368 aa).

The tract at residues 16–90 (TLTLEDVKKQ…KLNPSDLSAP (75 aa)) is sigma-70 factor domain-1. Positions 69–90 (LVNEKDSSDTDEKLNPSDLSAP) are disordered. Residues 71 to 83 (NEKDSSDTDEKLN) show a composition bias toward basic and acidic residues. A sigma-70 factor domain-2 region spans residues 135–205 (LAEANLRLVV…TRAIADQART (71 aa)). An Interaction with polymerase core subunit RpoC motif is present at residues 159–162 (DLIQ). Residues 214 to 291 (ETINKLIRVQ…QEAQSPSDHA (78 aa)) form a sigma-70 factor domain-3 region. The interval 303 to 356 (VLDTLTDREENVLRLRFGLDDGRTRTLEEVGKVFGVTRERIRQIEAKALRKLRH) is sigma-70 factor domain-4. A DNA-binding region (H-T-H motif) is located at residues 329–348 (LEEVGKVFGVTRERIRQIEA).

It belongs to the sigma-70 factor family. RpoD/SigA subfamily. Interacts transiently with the RNA polymerase catalytic core formed by RpoA, RpoB, RpoC and RpoZ (2 alpha, 1 beta, 1 beta' and 1 omega subunit) to form the RNA polymerase holoenzyme that can initiate transcription. Interacts (via sigma-70 factor domain 4) with the phage G1 protein gp67; this inhibits rRNA synthesis. Interaction with phage G1 protein gp67 does not inhibit transcription in general, but selectively inhibits transcription from promoters that require interaction of the RNA polymerase alpha subunit with DNA sequences upstream of the -35 promoter element.

It is found in the cytoplasm. In terms of biological role, sigma factors are initiation factors that promote the attachment of RNA polymerase to specific initiation sites and are then released. This sigma factor is the primary sigma factor during exponential growth. This Staphylococcus aureus (strain NCTC 8325 / PS 47) protein is RNA polymerase sigma factor SigA.